A 79-amino-acid chain; its full sequence is Acyl carrier protein (79 aa).

The Carrier domain maps to 2–77 (SEIGERVKKI…DAVKFLEKNA (76 aa)). Ser37 bears the O-(pantetheine 4'-phosphoryl)serine mark.

Belongs to the acyl carrier protein (ACP) family. 4'-phosphopantetheine is transferred from CoA to a specific serine of apo-ACP by AcpS. This modification is essential for activity because fatty acids are bound in thioester linkage to the sulfhydryl of the prosthetic group.

The protein resides in the cytoplasm. The protein operates within lipid metabolism; fatty acid biosynthesis. Its function is as follows. Carrier of the growing fatty acid chain in fatty acid biosynthesis. This chain is Acyl carrier protein, found in Rhodopseudomonas palustris (strain BisA53).